The sequence spans 329 residues: 7,8-didemethyl-8-hydroxy-5-deazariboflavin synthase (329 aa).

The Radical SAM core domain occupies 1–235 (MFIPVTNICR…SDVSVQVAPN (235 aa)). [4Fe-4S] cluster-binding residues include Cys-9, Cys-13, and Cys-16.

It belongs to the radical SAM superfamily. CofG family. As to quaternary structure, consists of two subunits, CofG and CofH. [4Fe-4S] cluster is required as a cofactor.

It carries out the reaction 5-amino-5-(4-hydroxybenzyl)-6-(D-ribitylimino)-5,6-dihydrouracil + S-adenosyl-L-methionine = 7,8-didemethyl-8-hydroxy-5-deazariboflavin + 5'-deoxyadenosine + L-methionine + NH4(+) + H(+). The protein operates within cofactor biosynthesis; coenzyme F0 biosynthesis. In terms of biological role, catalyzes the radical-mediated synthesis of 7,8-didemethyl-8-hydroxy-5-deazariboflavin from 5-amino-5-(4-hydroxybenzyl)-6-(D-ribitylimino)-5,6-dihydrouracil. The polypeptide is 7,8-didemethyl-8-hydroxy-5-deazariboflavin synthase (Methanosarcina acetivorans (strain ATCC 35395 / DSM 2834 / JCM 12185 / C2A)).